A 243-amino-acid polypeptide reads, in one-letter code: 3-deoxy-manno-octulosonate cytidylyltransferase (243 aa).

It belongs to the KdsB family.

It localises to the cytoplasm. The enzyme catalyses 3-deoxy-alpha-D-manno-oct-2-ulosonate + CTP = CMP-3-deoxy-beta-D-manno-octulosonate + diphosphate. The protein operates within nucleotide-sugar biosynthesis; CMP-3-deoxy-D-manno-octulosonate biosynthesis; CMP-3-deoxy-D-manno-octulosonate from 3-deoxy-D-manno-octulosonate and CTP: step 1/1. It functions in the pathway bacterial outer membrane biogenesis; lipopolysaccharide biosynthesis. Activates KDO (a required 8-carbon sugar) for incorporation into bacterial lipopolysaccharide in Gram-negative bacteria. The sequence is that of 3-deoxy-manno-octulosonate cytidylyltransferase from Helicobacter pylori (strain HPAG1).